A 120-amino-acid chain; its full sequence is Ribonuclease P protein component (120 aa).

It belongs to the RnpA family. In terms of assembly, consists of a catalytic RNA component (M1 or rnpB) and a protein subunit.

It catalyses the reaction Endonucleolytic cleavage of RNA, removing 5'-extranucleotides from tRNA precursor.. Its function is as follows. RNaseP catalyzes the removal of the 5'-leader sequence from pre-tRNA to produce the mature 5'-terminus. It can also cleave other RNA substrates such as 4.5S RNA. The protein component plays an auxiliary but essential role in vivo by binding to the 5'-leader sequence and broadening the substrate specificity of the ribozyme. This Acidothermus cellulolyticus (strain ATCC 43068 / DSM 8971 / 11B) protein is Ribonuclease P protein component.